Reading from the N-terminus, the 502-residue chain is Probable zinc metalloprotease MGG_02107 (502 aa).

The N-terminal stretch at 1-21 (MRSPPGAVAALASVAAQLATA) is a signal peptide. Zn(2+) is bound by residues histidine 182, aspartate 202, and glutamate 235. Asparagine 250 carries N-linked (GlcNAc...) asparagine glycosylation. Aspartate 262 contributes to the Zn(2+) binding site. The disordered stretch occupies residues 284–307 (QGGSPAGESKERAETRASIGGEND). N-linked (GlcNAc...) asparagine glycans are attached at residues asparagine 375, asparagine 417, and asparagine 427. In terms of domain architecture, Fibronectin type-III spans 414–502 (QVRNVTVDTS…KSPATMPFPG (89 aa)).

Belongs to the peptidase M28 family. M28B subfamily. It depends on Zn(2+) as a cofactor.

It is found in the secreted. This Pyricularia oryzae (strain 70-15 / ATCC MYA-4617 / FGSC 8958) (Rice blast fungus) protein is Probable zinc metalloprotease MGG_02107.